A 151-amino-acid chain; its full sequence is Nucleoside diphosphate kinase (151 aa).

Positions 9, 57, 86, 92, 103, and 113 each coordinate ATP. Catalysis depends on H116, which acts as the Pros-phosphohistidine intermediate.

This sequence belongs to the NDK family. In terms of assembly, homotetramer. Mg(2+) is required as a cofactor.

Its subcellular location is the cytoplasm. It catalyses the reaction a 2'-deoxyribonucleoside 5'-diphosphate + ATP = a 2'-deoxyribonucleoside 5'-triphosphate + ADP. The catalysed reaction is a ribonucleoside 5'-diphosphate + ATP = a ribonucleoside 5'-triphosphate + ADP. In terms of biological role, major role in the synthesis of nucleoside triphosphates other than ATP. The ATP gamma phosphate is transferred to the NDP beta phosphate via a ping-pong mechanism, using a phosphorylated active-site intermediate. The polypeptide is Nucleoside diphosphate kinase (Chloroflexus aggregans (strain MD-66 / DSM 9485)).